A 756-amino-acid chain; its full sequence is Catalase-peroxidase (756 aa).

Positions 91–244 form a cross-link, tryptophyl-tyrosyl-methioninium (Trp-Tyr) (with M-270); that stretch reads WHSAGTYRTG…LAAVQMGLIY (154 aa). Residue histidine 92 is the Proton acceptor of the active site. A disordered region spans residues 198-230; it reads AQKKMQQPGDGTLVAEPENHANEESRTASGERN. Over residues 214-223 the composition is skewed to basic and acidic residues; that stretch reads PENHANEESR. The segment at residues 244-270 is a cross-link (tryptophyl-tyrosyl-methioninium (Tyr-Met) (with W-91)); sequence YVNPEGPEGVPDPVASAKDIRETFGRM. Residue histidine 285 participates in heme b binding. The segment at 371-390 is disordered; it reads KNGAGAGKIPDAHDPSKRHA.

It belongs to the peroxidase family. Peroxidase/catalase subfamily. In terms of assembly, homodimer or homotetramer. It depends on heme b as a cofactor. Formation of the three residue Trp-Tyr-Met cross-link is important for the catalase, but not the peroxidase activity of the enzyme.

It catalyses the reaction H2O2 + AH2 = A + 2 H2O. The catalysed reaction is 2 H2O2 = O2 + 2 H2O. Functionally, bifunctional enzyme with both catalase and broad-spectrum peroxidase activity. This Pseudomonas savastanoi pv. phaseolicola (strain 1448A / Race 6) (Pseudomonas syringae pv. phaseolicola (strain 1448A / Race 6)) protein is Catalase-peroxidase.